The sequence spans 65 residues: MAVPFRRTGKTAKRKRRTHYKLDNPALVVCKQTNNFTLSHRVTKNSGYYKGRLLLENNKIVKKVA.

Belongs to the bacterial ribosomal protein bL32 family.

This Phytoplasma australiense protein is Large ribosomal subunit protein bL32.